Reading from the N-terminus, the 295-residue chain is Glycine N-acyltransferase (295 aa).

N6-acetyllysine; alternate is present on residues Lys-15, Lys-126, and Lys-140. Residues Lys-15, Lys-126, and Lys-140 each carry the N6-succinyllysine; alternate modification. Position 158 is an N6-acetyllysine (Lys-158). Lys-168 bears the N6-succinyllysine mark. Lys-255 is subject to N6-acetyllysine; alternate. Lys-255 is modified (N6-succinyllysine; alternate).

The protein belongs to the glycine N-acyltransferase family. In terms of tissue distribution, detected in liver (at protein level).

It localises to the mitochondrion. The catalysed reaction is an acyl-CoA + glycine = an N-acylglycine + CoA + H(+). The enzyme catalyses benzoyl-CoA + glycine = N-benzoylglycine + CoA + H(+). Its function is as follows. Mitochondrial acyltransferase which transfers an acyl group to the N-terminus of glycine and glutamine, although much less efficiently. Can conjugate a multitude of substrates to form a variety of N-acylglycines, thereby detoxify xenobiotics, such as benzoic acid or salicylic acid, and endogenous organic acids, such as isovaleric acid. This is Glycine N-acyltransferase (GLYAT) from Bos taurus (Bovine).